A 289-amino-acid chain; its full sequence is 4-hydroxy-3-methylbut-2-enyl diphosphate reductase (289 aa).

Cysteine 13 is a [4Fe-4S] cluster binding site. The (2E)-4-hydroxy-3-methylbut-2-enyl diphosphate site is built by histidine 41 and histidine 75. Residues histidine 41 and histidine 75 each coordinate dimethylallyl diphosphate. The isopentenyl diphosphate site is built by histidine 41 and histidine 75. Cysteine 97 is a binding site for [4Fe-4S] cluster. Histidine 129 is a (2E)-4-hydroxy-3-methylbut-2-enyl diphosphate binding site. Histidine 129 serves as a coordination point for dimethylallyl diphosphate. Isopentenyl diphosphate is bound at residue histidine 129. Residue glutamate 131 is the Proton donor of the active site. A (2E)-4-hydroxy-3-methylbut-2-enyl diphosphate-binding site is contributed by threonine 167. Cysteine 198 provides a ligand contact to [4Fe-4S] cluster. Serine 226, serine 227, asparagine 228, and serine 270 together coordinate (2E)-4-hydroxy-3-methylbut-2-enyl diphosphate. Serine 226, serine 227, asparagine 228, and serine 270 together coordinate dimethylallyl diphosphate. Isopentenyl diphosphate contacts are provided by serine 226, serine 227, asparagine 228, and serine 270.

It belongs to the IspH family. Requires [4Fe-4S] cluster as cofactor.

It carries out the reaction isopentenyl diphosphate + 2 oxidized [2Fe-2S]-[ferredoxin] + H2O = (2E)-4-hydroxy-3-methylbut-2-enyl diphosphate + 2 reduced [2Fe-2S]-[ferredoxin] + 2 H(+). The enzyme catalyses dimethylallyl diphosphate + 2 oxidized [2Fe-2S]-[ferredoxin] + H2O = (2E)-4-hydroxy-3-methylbut-2-enyl diphosphate + 2 reduced [2Fe-2S]-[ferredoxin] + 2 H(+). It participates in isoprenoid biosynthesis; dimethylallyl diphosphate biosynthesis; dimethylallyl diphosphate from (2E)-4-hydroxy-3-methylbutenyl diphosphate: step 1/1. It functions in the pathway isoprenoid biosynthesis; isopentenyl diphosphate biosynthesis via DXP pathway; isopentenyl diphosphate from 1-deoxy-D-xylulose 5-phosphate: step 6/6. Catalyzes the conversion of 1-hydroxy-2-methyl-2-(E)-butenyl 4-diphosphate (HMBPP) into a mixture of isopentenyl diphosphate (IPP) and dimethylallyl diphosphate (DMAPP). Acts in the terminal step of the DOXP/MEP pathway for isoprenoid precursor biosynthesis. The protein is 4-hydroxy-3-methylbut-2-enyl diphosphate reductase of Bacteroides thetaiotaomicron (strain ATCC 29148 / DSM 2079 / JCM 5827 / CCUG 10774 / NCTC 10582 / VPI-5482 / E50).